A 61-amino-acid chain; its full sequence is Metallothionein-1H (61 aa).

N-acetylmethionine is present on M1. The interval 1–29 (MDPNCSCEAGGSCACAGSCKCKKCKCTSC) is beta. Residues C5, C7, C13, C15, C19, C21, C24, C26, C29, C33, C34, C36, C37, C41, C44, C48, C50, and C57 each contribute to the a divalent metal cation site. An alpha region spans residues 30-61 (KKSCCSCCPLGCAKCAQGCICKGASEKCSCCA). S58 carries the phosphoserine modification. C59 and C60 together coordinate a divalent metal cation.

It belongs to the metallothionein superfamily. Type 1 family. Monomer.

Functionally, metallothioneins have a high content of cysteine residues that bind various heavy metals; these proteins are transcriptionally regulated by both heavy metals and glucocorticoids. This chain is Metallothionein-1H (MT1H), found in Homo sapiens (Human).